The chain runs to 400 residues: CCA-adding enzyme (400 aa).

The ATP site is built by Gly28 and Arg31. The CTP site is built by Gly28 and Arg31. Residues Asp41 and Asp43 each coordinate Mg(2+). Positions 112, 155, 158, 161, and 164 each coordinate ATP. Positions 112, 155, 158, 161, and 164 each coordinate CTP.

This sequence belongs to the tRNA nucleotidyltransferase/poly(A) polymerase family. Bacterial CCA-adding enzyme type 3 subfamily. As to quaternary structure, homodimer. Requires Mg(2+) as cofactor.

The catalysed reaction is a tRNA precursor + 2 CTP + ATP = a tRNA with a 3' CCA end + 3 diphosphate. It carries out the reaction a tRNA with a 3' CCA end + 2 CTP + ATP = a tRNA with a 3' CCACCA end + 3 diphosphate. In terms of biological role, catalyzes the addition and repair of the essential 3'-terminal CCA sequence in tRNAs without using a nucleic acid template. Adds these three nucleotides in the order of C, C, and A to the tRNA nucleotide-73, using CTP and ATP as substrates and producing inorganic pyrophosphate. tRNA 3'-terminal CCA addition is required both for tRNA processing and repair. Also involved in tRNA surveillance by mediating tandem CCA addition to generate a CCACCA at the 3' terminus of unstable tRNAs. While stable tRNAs receive only 3'-terminal CCA, unstable tRNAs are marked with CCACCA and rapidly degraded. The chain is CCA-adding enzyme from Staphylococcus aureus (strain MSSA476).